The following is a 251-amino-acid chain: uncharacterized protein (251 aa).

Positions 207–251 are disordered; that stretch reads ATPHSKRGRTKLYRKEPPGDNRSPPPWQEPHGEGLAEKLSPGPAR.

This is an uncharacterized protein from Treponema pallidum (strain Nichols).